The primary structure comprises 87 residues: Protein WFDC11 (87 aa).

The signal sequence occupies residues 1–25 (MVSLMKLWIPMLMTFFCTVLLSVLG).

The protein localises to the secreted. This Homo sapiens (Human) protein is Protein WFDC11 (WFDC11).